A 299-amino-acid polypeptide reads, in one-letter code: tRNA pseudouridine synthase B (299 aa).

The Nucleophile role is filled by D47.

Belongs to the pseudouridine synthase TruB family. Type 1 subfamily.

The enzyme catalyses uridine(55) in tRNA = pseudouridine(55) in tRNA. Responsible for synthesis of pseudouridine from uracil-55 in the psi GC loop of transfer RNAs. The sequence is that of tRNA pseudouridine synthase B from Dechloromonas aromatica (strain RCB).